The sequence spans 443 residues: Tryptophan synthase beta chain (443 aa).

An N6-(pyridoxal phosphate)lysine modification is found at K110.

Belongs to the TrpB family. In terms of assembly, tetramer of two alpha and two beta chains. It depends on pyridoxal 5'-phosphate as a cofactor.

It catalyses the reaction (1S,2R)-1-C-(indol-3-yl)glycerol 3-phosphate + L-serine = D-glyceraldehyde 3-phosphate + L-tryptophan + H2O. It participates in amino-acid biosynthesis; L-tryptophan biosynthesis; L-tryptophan from chorismate: step 5/5. Functionally, the beta subunit is responsible for the synthesis of L-tryptophan from indole and L-serine. This Thermococcus onnurineus (strain NA1) protein is Tryptophan synthase beta chain.